The primary structure comprises 921 residues: TRPM8 channel-associated factor 1 (921 aa).

The Peptidase M60 domain occupies Tyr542–Gly841.

It belongs to the TCAF family. As to quaternary structure, interacts with TRPM8 (via N-terminus and C-terminus domains); the interaction inhibits TRPM8 channel activity. Interacts with TRPV6. As to expression, isoform 2 is expressed in the prostate and strongly expressed in cancerous prostate samples.

Its subcellular location is the cell membrane. In terms of biological role, positively regulates the plasma membrane cation channel TRPM8 activity. Involved in the recruitment of TRPM8 to the cell surface. Promotes prostate cancer cell migration inhibition in a TRPM8-dependent manner. The chain is TRPM8 channel-associated factor 1 from Homo sapiens (Human).